A 92-amino-acid chain; its full sequence is Small ribosomal subunit protein uS19 (92 aa).

Belongs to the universal ribosomal protein uS19 family.

In terms of biological role, protein S19 forms a complex with S13 that binds strongly to the 16S ribosomal RNA. The chain is Small ribosomal subunit protein uS19 from Geobacillus sp. (strain WCH70).